The following is a 126-amino-acid chain: Ribosome-binding factor A (126 aa).

It belongs to the RbfA family. As to quaternary structure, monomer. Binds 30S ribosomal subunits, but not 50S ribosomal subunits or 70S ribosomes.

Its subcellular location is the cytoplasm. One of several proteins that assist in the late maturation steps of the functional core of the 30S ribosomal subunit. Associates with free 30S ribosomal subunits (but not with 30S subunits that are part of 70S ribosomes or polysomes). Required for efficient processing of 16S rRNA. May interact with the 5'-terminal helix region of 16S rRNA. The protein is Ribosome-binding factor A of Clostridioides difficile (strain 630) (Peptoclostridium difficile).